Reading from the N-terminus, the 138-residue chain is Large ribosomal subunit protein bL19 (138 aa).

The protein belongs to the bacterial ribosomal protein bL19 family.

Functionally, this protein is located at the 30S-50S ribosomal subunit interface and may play a role in the structure and function of the aminoacyl-tRNA binding site. The sequence is that of Large ribosomal subunit protein bL19 from Leptospira interrogans serogroup Icterohaemorrhagiae serovar Lai (strain 56601).